We begin with the raw amino-acid sequence, 323 residues long: Replication-associated protein A (323 aa).

One can recognise a CRESS-DNA virus Rep endonuclease domain in the interval 18-121; that stretch reads RHRNANTFLT…PKDKWEKGTY (104 aa). Positions 25 to 28 match the RCR-1 motif; it reads FLTY. Glutamate 59, histidine 67, and histidine 69 together coordinate a divalent metal cation. Residues 67-69 carry the RCR-2 motif; that stretch reads HCH. The active-site For DNA cleavage activity is the tyrosine 107. Positions 107–110 match the RCR-3 motif; it reads YILK. Aspartate 111 is an a divalent metal cation binding site. Positions 181–193 are oligomerization; the sequence is SASRLFPDIAEPY. The short motif at 204–208 is the LXCXE motif, interaction with host RBR1 element; it reads LHCNE. The tract at residues 256–286 is disordered; sequence KEREASTSAAQHGQVKHPGLEASDDTTTGKT.

It belongs to the geminiviridae Rep protein family. As to quaternary structure, homooligomer. Interacts (via LXCXE domain) with host retinoblastoma-related protein 1 (RBR1), and may thereby deregulate the host cell cycle. Part of the C- and V-complexes which are RepA-Rep-DNA complexes involved in the c-sense and v-sense transcription. Mg(2+) serves as cofactor. The cofactor is Mn(2+).

It localises to the host nucleus. The protein localises to the host cytoplasm. In terms of biological role, implicated in enhancement of V-sense gene expression. Acts a an inhibitor of C-sense gene transcription. This chain is Replication-associated protein A, found in Megathyrsus maximus (PanSV).